The sequence spans 201 residues: Putative manganese efflux pump MntP 2 (201 aa).

6 helical membrane passes run 3 to 23 (LISV…VSIT), 39 to 59 (IGLF…SIGI), 65 to 85 (IAAL…GKMI), 116 to 136 (LILL…SFAF), 141 to 161 (IINT…IGVM), and 176 to 196 (ILGG…HTNI).

It belongs to the MntP (TC 9.B.29) family.

The protein localises to the cell membrane. Functionally, probably functions as a manganese efflux pump. The sequence is that of Putative manganese efflux pump MntP 2 from Clostridium botulinum (strain Hall / ATCC 3502 / NCTC 13319 / Type A).